The chain runs to 376 residues: Probable sister chromatid cohesion protein DCC1 (376 aa).

The interval Gln213–Asp232 is disordered. Gly residues predominate over residues Ser219–Asp232.

This sequence belongs to the DCC1 family.

Its subcellular location is the nucleus. Its function is as follows. Loads PCNA onto primed templates regulating velocity, spacing and restart activity of replication forks. May couple DNA replication to sister chromatid cohesion. The polypeptide is Probable sister chromatid cohesion protein DCC1 (Dictyostelium discoideum (Social amoeba)).